A 1163-amino-acid polypeptide reads, in one-letter code: Voltage-gated inwardly rectifying potassium channel KCNH2 (1163 aa).

At 1–405 (MPVRRGHVAP…RIHRWTILHY (405 aa)) the chain is on the cytoplasmic side. A PAS domain is found at 17–88 (TIIRKFEGQS…AAQIAQALLG (72 aa)). The PAC domain maps to 92-144 (RKVEIAFYRKDGSCFLCLVDVVPVKNEDGAVIMFILNFEVVMEKDMVGSPAHD). The tract at residues 235 to 286 (VGPASASPVASIPGPHPSPRAQSLNPDASGSSCSLARTRSRESCASVRRASS) is disordered. Phosphoserine occurs at positions 239 and 245. Residues 254-271 (RAQSLNPDASGSSCSLAR) show a composition bias toward polar residues. Phosphoserine occurs at positions 285, 286, 322, and 353. Residues 406 to 426 (SPFKAVWDWLILLLVIYTAVF) form a helical membrane-spanning segment. Over 427 to 452 (TPYSAAFLLKETEDGSQAPDCGYACQ) the chain is Extracellular. A helical membrane pass occupies residues 453–473 (PLAVVDLLVDIMFIVDILINF). The Cytoplasmic segment spans residues 474–497 (RTTYVNANEEVVSHPGRIAVHYFK). Residues 498–518 (GWFLIDMVAAIPFDLLIFGSG) traverse the membrane as a helical segment. At 519 to 522 (SEEL) the chain is on the extracellular side. A helical; Voltage-sensor membrane pass occupies residues 523–543 (IGLLKTARLLRLVRVARKLDR). Residues 544–549 (YSEYGA) are Cytoplasmic-facing. A helical transmembrane segment spans residues 550–570 (AVLFLLMCTFALIAHWLACIW). Residues 571 to 613 (YAIGNMEQPHMDSHIGWLHNLGDQIGKPYNSSGLGGPSIKDKY) lie on the Extracellular side of the membrane. N-linked (GlcNAc...) asparagine glycosylation is present at Asn600. An intramembrane region (pore-forming) is located at residues 614–634 (VTALYFTFSSLTSVGFGNVSP). A Selectivity filter motif is present at residues 626–631 (SVGFGN). The Extracellular portion of the chain corresponds to 635–640 (NTNSEK). Residues 641–661 (IFSICVMLIGSLMYASIFGNV) form a helical membrane-spanning segment. Over 662 to 1163 (SAIIQRLYSG…LHRHGSDPGS (502 aa)) the chain is Cytoplasmic. A cNMP-binding domain region spans residues 744 to 844 (PFRGATKGCL…IHRDDLLEVL (101 aa)). Phosphoserine is present on residues Ser873 and Ser876. Disordered stretches follow at residues 873–992 (SPSS…NPLS), 1015–1043 (ELPRCPAPAPSLLNIPLSSPGRRSRGDVE), and 1126–1163 (AGAPELPQDGPTRRLSLPGQLGALTSQPLHRHGSDPGS). Positions 885–894 (RQRKRKLSFR) are enriched in basic residues. Positions 932 to 943 (GESPSSGPSSPE) are enriched in low complexity. Arg1018 carries the post-translational modification Omega-N-methylarginine. The stretch at 1039 to 1066 (RGDVESRLDALQRQLNRLETRLSADMAT) forms a coiled coil. Residue Ser1141 is modified to Phosphoserine.

The protein belongs to the potassium channel family. H (Eag) (TC 1.A.1.20) subfamily. Kv11.1/KCNH2 sub-subfamily. In terms of assembly, the potassium channel is probably composed of a homo- or heterotetrameric complex of pore-forming alpha subunits that can associate with modulating beta subunits. Interacts with DNAJB12 and DNAJB14; chaperones DNAJB12 and DNAJB14 promote tetramerization. Heteromultimer with KCNH6/ERG2 and KCNH7/ERG3. Interacts with ALG10B. Forms a stable complex with KCNE1 or KCNE2, and that this heteromultimerization regulates Inward rectifier potassium channel activity. Interacts with CANX. The core-glycosylated, but not the fully glycosylated form interacts with RNF207. Interacts with NDFIP1 and NDFIP2; this interaction decreases the cell membrane expression by targeting KCNH2, through interaction with NEDD4L, for the degradation through the multivesicular bodies (MVBs)-lysosomal pathway. In terms of processing, phosphorylated on serine and threonine residues. Phosphorylation by PKA inhibits ion conduction. Highly expressed in brain and testis, slightly less so in heart, adrenal, retina and thymus. Detected at lower levels in lung, soleus, tibialis, and at very low levels in cornea and lens. A shorter transcript is detected in skeletal muscle. Found in pituitary.

It is found in the cell membrane. It carries out the reaction K(+)(in) = K(+)(out). In terms of biological role, pore-forming (alpha) subunit of voltage-gated inwardly rectifying potassium channel. Characterized by unusual gating kinetics by producing relatively small outward currents during membrane depolarization and large inward currents during subsequent repolarization which reflect a rapid inactivation during depolarization and quick recovery from inactivation but slow deactivation (closing) during repolarization. Channel properties are modulated by cAMP and subunit assembly. Forms a stable complex with KCNE1 or KCNE2, and that this heteromultimerization regulates inward rectifier potassium channel activity. In Rattus norvegicus (Rat), this protein is Voltage-gated inwardly rectifying potassium channel KCNH2.